A 436-amino-acid chain; its full sequence is GTPase Der (436 aa).

EngA-type G domains follow at residues 4-167 (PTVA…PTEV) and 175-351 (IRFS…ESQN). Residues 10-17 (GRPNVGKS), 57-61 (DTGGI), 119-122 (NKVD), 181-188 (GRPNVGKS), 229-233 (DTAGM), and 294-297 (NKWD) contribute to the GTP site. In terms of domain architecture, KH-like spans 352-436 (RRISSAVLND…PIHLIARKRK (85 aa)).

Belongs to the TRAFAC class TrmE-Era-EngA-EngB-Septin-like GTPase superfamily. EngA (Der) GTPase family. In terms of assembly, associates with the 50S ribosomal subunit.

Functionally, GTPase that plays an essential role in the late steps of ribosome biogenesis. The polypeptide is GTPase Der (Streptococcus thermophilus (strain ATCC BAA-491 / LMD-9)).